Here is a 557-residue protein sequence, read N- to C-terminus: MRSDMIKKGFDKAPHRSLLKATGLKDEDFDKPFIAICNSFIEIIPGHKHLNEFGKLVKEAVRAAGMVPFEFNTIGVDDGIAMGHIGMRYSLPSREIIADSVETVVNAHWFDGMICIPNCDKITPGMMMAALRINIPTVFVSGGPMAAGKTSKGEVVDLSSVFEGVGAYQSGKISEEELKDIEDHGCPSCGSCSGMFTANSMNCLCEVLGLALPGNGSILAIDPRREELIKQAAEKLKILIERDIKPRDIVTEEAIDDAFALDMAMGGSTNTVLHTLALAHEAGLDYDMSRIDAVSRRVPHLCKVSPASNWHMEDIDRAGGISAILKEMSRKEGVLHLDRITATGQTLRENIAHAEIKDKEVIHSLENPHSEEGGLRILKGNLAKDGAVIKSGATEVKRFEGPCVIFNSQDEALAGIMLGKVKKGDVVVIRYEGPRGGPGMPEMLAPTSAIAGMGLGADVALLTDGRFSGASRGISVGHISPEAAAGGTIALLEQGDIVCIDVEERLLEVRVSDEELDKRKKEWKRPEPKVKTGWLGRYAQMVTSANTGAVLKVPNFD.

Asp-78 is a Mg(2+) binding site. Cys-119 serves as a coordination point for [2Fe-2S] cluster. Asp-120 and Lys-121 together coordinate Mg(2+). An N6-carboxylysine modification is found at Lys-121. Cys-192 is a binding site for [2Fe-2S] cluster. A Mg(2+)-binding site is contributed by Glu-442. The Proton acceptor role is filled by Ser-468.

The protein belongs to the IlvD/Edd family. As to quaternary structure, homodimer. [2Fe-2S] cluster serves as cofactor. The cofactor is Mg(2+).

The catalysed reaction is (2R)-2,3-dihydroxy-3-methylbutanoate = 3-methyl-2-oxobutanoate + H2O. It carries out the reaction (2R,3R)-2,3-dihydroxy-3-methylpentanoate = (S)-3-methyl-2-oxopentanoate + H2O. Its pathway is amino-acid biosynthesis; L-isoleucine biosynthesis; L-isoleucine from 2-oxobutanoate: step 3/4. The protein operates within amino-acid biosynthesis; L-valine biosynthesis; L-valine from pyruvate: step 3/4. Its function is as follows. Functions in the biosynthesis of branched-chain amino acids. Catalyzes the dehydration of (2R,3R)-2,3-dihydroxy-3-methylpentanoate (2,3-dihydroxy-3-methylvalerate) into 2-oxo-3-methylpentanoate (2-oxo-3-methylvalerate) and of (2R)-2,3-dihydroxy-3-methylbutanoate (2,3-dihydroxyisovalerate) into 2-oxo-3-methylbutanoate (2-oxoisovalerate), the penultimate precursor to L-isoleucine and L-valine, respectively. The polypeptide is Dihydroxy-acid dehydratase (Bacillus cereus (strain ATCC 10987 / NRS 248)).